Reading from the N-terminus, the 973-residue chain is Serine/threonine-protein kinase atg1 (973 aa).

The Protein kinase domain maps to 23–328; sequence YTRLDEIGRG…FPDFFQNGVI (306 aa). ATP contacts are provided by residues 29–37 and Lys52; that span reads IGRGSFATV. The Proton acceptor role is filled by Asp166. 4 disordered regions span residues 338 to 446, 460 to 482, 523 to 587, and 949 to 973; these read DDLP…PGRQ, RQKGRNTFSEGSPQIDRQADKLR, GNIS…QSPT, and PTPSANVPSKMASSNPVSVGATPPK. Residues 387-407 show a composition bias toward polar residues; that stretch reads GLTQRPPSQNQRFGTPQTTTP. The segment covering 523-537 has biased composition (polar residues); sequence GNISRGAQTGALSRR. A compositionally biased stretch (basic and acidic residues) spans 566–582; it reads SRADSMHNRQGSYERRY. Over residues 951 to 965 the composition is skewed to polar residues; it reads PSANVPSKMASSNPV.

It belongs to the protein kinase superfamily. Ser/Thr protein kinase family. APG1/unc-51/ULK1 subfamily. In terms of assembly, homodimer. Forms a ternary complex with ATG13 and ATG17.

It is found in the cytoplasm. It localises to the preautophagosomal structure membrane. It catalyses the reaction L-seryl-[protein] + ATP = O-phospho-L-seryl-[protein] + ADP + H(+). It carries out the reaction L-threonyl-[protein] + ATP = O-phospho-L-threonyl-[protein] + ADP + H(+). Functionally, serine/threonine protein kinase involved in the cytoplasm to vacuole transport (Cvt) and found to be essential in autophagy, where it is required for the formation of autophagosomes. Involved in the clearance of protein aggregates which cannot be efficiently cleared by the proteasome. Required for selective autophagic degradation of the nucleus (nucleophagy) as well as for mitophagy which contributes to regulate mitochondrial quantity and quality by eliminating the mitochondria to a basal level to fulfill cellular energy requirements and preventing excess ROS production. Also involved in endoplasmic reticulum-specific autophagic process, in selective removal of ER-associated degradation (ERAD) substrates. Plays a key role in ATG9 and ATG23 cycling through the pre-autophagosomal structure and is necessary to promote ATG18 binding to ATG9 through phosphorylation of ATG9. Catalyzes phosphorylation of ATG4, decreasing the interaction between ATG4 and ATG8 and impairing deconjugation of PE-conjugated forms of ATG8. This is Serine/threonine-protein kinase atg1 from Aspergillus fumigatus (strain ATCC MYA-4609 / CBS 101355 / FGSC A1100 / Af293) (Neosartorya fumigata).